The chain runs to 227 residues: uncharacterized protein (227 aa).

2 helical membrane passes run 13-35 and 155-177; these read CVRA…FAFS and IFFR…MVFL. Residues 192-227 are disordered; that stretch reads GDARPRPAGPQGTARSRTDEAQVSPGTPPECPVSVF. The span at 217–227 shows a compositional bias: pro residues; the sequence is GTPPECPVSVF.

It is found in the cell membrane. This is an uncharacterized protein from Treponema pallidum (strain Nichols).